We begin with the raw amino-acid sequence, 359 residues long: Transcription factor MYB115 (359 aa).

A compositionally biased stretch (polar residues) spans 1 to 17; that stretch reads MYHQNLISSTPNQNSNP. The segment at 1–21 is disordered; it reads MYHQNLISSTPNQNSNPHDWD. 2 HTH myb-type domains span residues 153 to 208 and 209 to 259; these read KDII…RPNI and KKND…RRLH. 2 DNA-binding regions (H-T-H motif) span residues 181–204 and 232–255; these read WTSI…HNHL and WTEI…NATK.

Accumulates in reproductive organs (e.g. flowers and siliques). Expressed at very low levels in vegetative organs.

It is found in the nucleus. In terms of biological role, transcription activator that recognizes the motif 5'-TAACGG-3' in the promoter of target genes. Promotes vegetative-to-embryonic transition and the formation of somatic embryos from root explants in a WUS-independent manner. Together with MYB118, activates the transcription of S-ACP-DES2/AAD2 and S-ACP-DES3/AAD3 thus promoting the biosynthesis of omega-7 monounsaturated fatty acid in seed endosperm. This is Transcription factor MYB115 from Arabidopsis thaliana (Mouse-ear cress).